Consider the following 198-residue polypeptide: Ras-related protein Rab-34, isoform NARR (198 aa).

13 repeat units span residues P7–R15, P16–R24, P25–R33, P34–R42, A43–P51, R52–S60, P61–T69, P70–S78, P79–S87, P88–S96, P97–S105, P106–T114, and P115–S123. Residues P7–R125 form a 13 x 9 AA approximate tandem-repeats of P-R-V-I-V-G-(S/T)-P-R region. The residue at position 13 (S13) is a Phosphoserine. Residues I37–R64 form a disordered region. A Phosphothreonine modification is found at T69. Phosphoserine is present on residues S78, S87, and S96. Positions V94–V121 are enriched in low complexity. The segment at V94–I198 is disordered. Position 123 is a phosphoserine (S123). Residues R145 to G157 are compositionally biased toward basic and acidic residues. A compositionally biased stretch (low complexity) spans G161 to R178.

May interact with EIF5A and ERF1. Post-translationally, phosphorylated during M-phase.

Its subcellular location is the nucleus. The protein resides in the nucleolus. The sequence is that of Ras-related protein Rab-34, isoform NARR (RAB34) from Homo sapiens (Human).